We begin with the raw amino-acid sequence, 145 residues long: Protein SPMIP3 (145 aa).

This is Protein SPMIP3 from Mus musculus (Mouse).